The sequence spans 166 residues: Pyruvoyl-dependent arginine decarboxylase (166 aa).

Position 45 is a pyruvic acid (Ser) (S45).

The protein belongs to the PdaD family. It depends on pyruvate as a cofactor.

It carries out the reaction L-arginine + H(+) = agmatine + CO2. This chain is Pyruvoyl-dependent arginine decarboxylase, found in Methanocella arvoryzae (strain DSM 22066 / NBRC 105507 / MRE50).